A 521-amino-acid chain; its full sequence is Transcription activator of gluconeogenesis SS1G_02293 (521 aa).

Acidic residues predominate over residues 1-12; it reads MSGETEIDDPEV. The segment at 1–75 is disordered; that stretch reads MSGETEIDDP…KFDPKDPLRP (75 aa). Basic and acidic residues-rich tracts occupy residues 21–49 and 65–74; these read YSDHEQELDVVGKEDDNQEMAEQKVRPDG and PKFDPKDPLR. Positions 84-112 form a DNA-binding region, zn(2)-C6 fungal-type; it reads CFACQRAHLTCGDERPCQRCIKRGLADAC. 3 disordered regions span residues 273–308, 322–358, and 478–501; these read SGSAETPPQDSSAGMPQNVGDLGYNNNPAFNNNPPF, VAPPGAHRPAKRQDTKSGPSGKLGPSSALGKRNRDPS, and NTGNSGASSSGSSGRGSFTTPRMR. Positions 275–287 are enriched in polar residues; it reads SAETPPQDSSAGM. Composition is skewed to low complexity over residues 297–308, 337–351, and 480–494; these read NNNPAFNNNPPF, KSGPSGKLGPSSALG, and GNSGASSSGSSGRGS. The region spanning 426-497 is the PAS domain; it reads TLFEYEDFML…GSSGRGSFTT (72 aa).

Belongs to the ERT1/acuK family.

It is found in the nucleus. In terms of biological role, transcription factor which regulates nonfermentable carbon utilization. Activator of gluconeogenetic genes. In Sclerotinia sclerotiorum (strain ATCC 18683 / 1980 / Ss-1) (White mold), this protein is Transcription activator of gluconeogenesis SS1G_02293.